The following is an 83-amino-acid chain: Small ribosomal subunit protein bS16 (83 aa).

Belongs to the bacterial ribosomal protein bS16 family.

The polypeptide is Small ribosomal subunit protein bS16 (Shewanella woodyi (strain ATCC 51908 / MS32)).